The sequence spans 779 residues: Endonuclease MutS2 (779 aa).

Gly-328–Thr-335 provides a ligand contact to ATP. In terms of domain architecture, Smr spans Leu-704–Gly-779.

This sequence belongs to the DNA mismatch repair MutS family. MutS2 subfamily. Homodimer. Binds to stalled ribosomes, contacting rRNA.

Endonuclease that is involved in the suppression of homologous recombination and thus may have a key role in the control of bacterial genetic diversity. Its function is as follows. Acts as a ribosome collision sensor, splitting the ribosome into its 2 subunits. Detects stalled/collided 70S ribosomes which it binds and splits by an ATP-hydrolysis driven conformational change. Acts upstream of the ribosome quality control system (RQC), a ribosome-associated complex that mediates the extraction of incompletely synthesized nascent chains from stalled ribosomes and their subsequent degradation. Probably generates substrates for RQC. This Streptococcus pyogenes serotype M1 protein is Endonuclease MutS2.